The chain runs to 201 residues: Small ribosomal subunit protein uS4 (201 aa).

A disordered region spans residues 21-43 (GTGKELNRRPYAPGDHGQGRRQK). The region spanning 93–153 (RRLDNMVYRL…EKSKDMAIIK (61 aa)) is the S4 RNA-binding domain.

The protein belongs to the universal ribosomal protein uS4 family. In terms of assembly, part of the 30S ribosomal subunit. Contacts protein S5. The interaction surface between S4 and S5 is involved in control of translational fidelity.

Its function is as follows. One of the primary rRNA binding proteins, it binds directly to 16S rRNA where it nucleates assembly of the body of the 30S subunit. With S5 and S12 plays an important role in translational accuracy. This Levilactobacillus brevis (strain ATCC 367 / BCRC 12310 / CIP 105137 / JCM 1170 / LMG 11437 / NCIMB 947 / NCTC 947) (Lactobacillus brevis) protein is Small ribosomal subunit protein uS4.